The sequence spans 482 residues: tRNA sulfurtransferase (482 aa).

The region spanning 61 to 165 (LTIRDALTRI…DDRLLLIKGR (105 aa)) is the THUMP domain. ATP is bound by residues 183 to 184 (LI), Lys-265, Gly-287, and Gln-296. Residues Cys-344 and Cys-456 are joined by a disulfide bond. One can recognise a Rhodanese domain in the interval 404-482 (FGPNDVILDI…GFNNVKVYRP (79 aa)). Cys-456 functions as the Cysteine persulfide intermediate in the catalytic mechanism.

The protein belongs to the ThiI family.

The protein localises to the cytoplasm. The catalysed reaction is [ThiI sulfur-carrier protein]-S-sulfanyl-L-cysteine + a uridine in tRNA + 2 reduced [2Fe-2S]-[ferredoxin] + ATP + H(+) = [ThiI sulfur-carrier protein]-L-cysteine + a 4-thiouridine in tRNA + 2 oxidized [2Fe-2S]-[ferredoxin] + AMP + diphosphate. It catalyses the reaction [ThiS sulfur-carrier protein]-C-terminal Gly-Gly-AMP + S-sulfanyl-L-cysteinyl-[cysteine desulfurase] + AH2 = [ThiS sulfur-carrier protein]-C-terminal-Gly-aminoethanethioate + L-cysteinyl-[cysteine desulfurase] + A + AMP + 2 H(+). The protein operates within cofactor biosynthesis; thiamine diphosphate biosynthesis. Catalyzes the ATP-dependent transfer of a sulfur to tRNA to produce 4-thiouridine in position 8 of tRNAs, which functions as a near-UV photosensor. Also catalyzes the transfer of sulfur to the sulfur carrier protein ThiS, forming ThiS-thiocarboxylate. This is a step in the synthesis of thiazole, in the thiamine biosynthesis pathway. The sulfur is donated as persulfide by IscS. The sequence is that of tRNA sulfurtransferase from Shigella flexneri.